Consider the following 87-residue polypeptide: Cell division topological specificity factor (87 aa).

It belongs to the MinE family.

In terms of biological role, prevents the cell division inhibition by proteins MinC and MinD at internal division sites while permitting inhibition at polar sites. This ensures cell division at the proper site by restricting the formation of a division septum at the midpoint of the long axis of the cell. This Herpetosiphon aurantiacus (strain ATCC 23779 / DSM 785 / 114-95) protein is Cell division topological specificity factor.